The following is a 253-amino-acid chain: Adapter protein MecA (253 aa).

This sequence belongs to the MecA family. Homodimer.

Its function is as follows. Enables the recognition and targeting of unfolded and aggregated proteins to the ClpC protease or to other proteins involved in proteolysis. The chain is Adapter protein MecA from Streptococcus pyogenes serotype M18 (strain MGAS8232).